We begin with the raw amino-acid sequence, 561 residues long: (+)-alpha-pinene synthase TPS2FN (561 aa).

(2E)-geranyl diphosphate is bound by residues R276, D313, D317, R455, and D458. Mg(2+) is bound by residues D313 and D317. Residues 313 to 317 carry the DDXXD motif motif; the sequence is DDIYD. Mg(2+) is bound by residues D458, T462, and E466.

This sequence belongs to the terpene synthase family. Tpsb subfamily. It depends on Mg(2+) as a cofactor. Mn(2+) serves as cofactor. In terms of tissue distribution, expressed in glandular trichomes two to four weeks after flowering onset.

The enzyme catalyses (2E)-geranyl diphosphate = (1R,5R)-alpha-pinene + diphosphate. The catalysed reaction is (2E)-geranyl diphosphate = (4S)-limonene + diphosphate. It carries out the reaction (2E)-geranyl diphosphate = sabinene + diphosphate. It catalyses the reaction (2E)-geranyl diphosphate = beta-phellandrene + diphosphate. The enzyme catalyses (2E)-geranyl diphosphate = camphene + diphosphate. The catalysed reaction is (2E)-geranyl diphosphate = isoterpinolene + diphosphate. It functions in the pathway secondary metabolite biosynthesis; terpenoid biosynthesis. It participates in terpene metabolism; (-)-alpha-pinene biosynthesis; (-)-alpha-pinene from geranyl diphosphate: step 1/1. Its function is as follows. Involved in monoterpene (C10) olefins biosynthesis, constituants of cannabinoids and terpenoids-rich resins. Catalyzes mainly the conversion of (2E)-geranyl diphosphate to (+)-alpha-pinene, and also produces minor products such as camphene, sabinene, beta-phellandrene, (-)-limonene and isoterpinolene. In Cannabis sativa (Hemp), this protein is (+)-alpha-pinene synthase TPS2FN.